Consider the following 348-residue polypeptide: D-erythrose-4-phosphate dehydrogenase (348 aa).

Residues 12-13 (RI) and R81 each bind NAD(+). Residues 154–156 (SCT), R200, 213–214 (TK), and R236 each bind substrate. C155 acts as the Nucleophile in catalysis. N318 contacts NAD(+).

It belongs to the glyceraldehyde-3-phosphate dehydrogenase family. Epd subfamily. As to quaternary structure, homotetramer.

It localises to the cytoplasm. It carries out the reaction D-erythrose 4-phosphate + NAD(+) + H2O = 4-phospho-D-erythronate + NADH + 2 H(+). It functions in the pathway cofactor biosynthesis; pyridoxine 5'-phosphate biosynthesis; pyridoxine 5'-phosphate from D-erythrose 4-phosphate: step 1/5. Its function is as follows. Catalyzes the NAD-dependent conversion of D-erythrose 4-phosphate to 4-phosphoerythronate. This Salmonella paratyphi B (strain ATCC BAA-1250 / SPB7) protein is D-erythrose-4-phosphate dehydrogenase.